The primary structure comprises 481 residues: Surface lipoprotein assembly modifier 1 (481 aa).

Residues 1-23 form the signal peptide; sequence MSIQTKFILFLSSSLFLTPYSVA. Residues 25 to 192 are N-terminal domain; that stretch reads EKSPQPHDGR…QYLSALNQRD (168 aa). The segment at 193–481 is C-terminal probable beta barrel; it reads QWKIQGGFSF…RIYVEISKTF (289 aa). 14 consecutive transmembrane segments (beta stranded) span residues 194 to 204, 233 to 243, 248 to 258, 271 to 281, 285 to 295, 315 to 325, 329 to 338, 353 to 363, 368 to 377, 390 to 400, 405 to 414, 432 to 441, 448 to 458, and 471 to 481; these read WKIQGGFSFLN, SYFGNAEKKWS, HFTKLSLEGSG, NARAGVGLGYQ, FELSLMPFTEK, SGARLDLSNWL, WQISTALEYG, YLASATLLYLA, YWFGGADYNR, KNVRLGWGQEW, STRLILNYAR, YASVLTIWHR, ITPKLSWSYQK, and NRIYVEISKTF.

The protein belongs to the Slam family.

Its subcellular location is the cell outer membrane. Functionally, required for correct export to the cell surface of some cell outer membrane lipoproteins. The sequence is that of Surface lipoprotein assembly modifier 1 from Haemophilus influenzae (strain ATCC 51907 / DSM 11121 / KW20 / Rd).